Here is a 107-residue protein sequence, read N- to C-terminus: Parvalbumin beta (107 aa).

Ser1 is subject to N-acetylserine. 2 EF-hand domains span residues 37-72 and 76-107; these read KSLD…FSPS and LTDA…MIKA. Ca(2+)-binding residues include Asp50, Asp52, Ser54, Phe56, Glu58, Glu61, Asp89, Asp91, Asp93, Met95, and Glu100.

The protein belongs to the parvalbumin family.

Its function is as follows. In muscle, parvalbumin is thought to be involved in relaxation after contraction. It binds two calcium ions. In Esox lucius (Northern pike), this protein is Parvalbumin beta.